The chain runs to 168 residues: ATP synthase F(1) complex subunit delta, mitochondrial (168 aa).

Residues Met-1–Tyr-22 constitute a mitochondrion transit peptide. N6-acetyllysine; alternate occurs at positions 136 and 165. Lys-136 and Lys-165 each carry N6-succinyllysine; alternate.

It belongs to the ATPase epsilon chain family. As to quaternary structure, component of the ATP synthase complex composed at least of ATP5F1A/subunit alpha, ATP5F1B/subunit beta, ATP5MC1/subunit c (homooctomer), MT-ATP6/subunit a, MT-ATP8/subunit 8, ATP5ME/subunit e, ATP5MF/subunit f, ATP5MG/subunit g, ATP5MK/subunit k, ATP5MJ/subunit j, ATP5F1C/subunit gamma, ATP5F1D/subunit delta, ATP5F1E/subunit epsilon, ATP5PF/subunit F6, ATP5PB/subunit b, ATP5PD/subunit d, ATP5PO/subunit OSCP. ATP synthase complex consists of a soluble F(1) head domain (subunits alpha(3) and beta(3)) - the catalytic core - and a membrane F(0) domain - the membrane proton channel (subunits c, a, 8, e, f, g, k and j). These two domains are linked by a central stalk (subunits gamma, delta, and epsilon) rotating inside the F1 region and a stationary peripheral stalk (subunits F6, b, d, and OSCP). Component of a complex composed at least by ATPIF1, ATP5F1A, ATP5F1B, ATP5F1C AND ATP5F1E.

The protein resides in the mitochondrion. It is found in the mitochondrion inner membrane. Its function is as follows. Subunit delta, of the mitochondrial membrane ATP synthase complex (F(1)F(0) ATP synthase or Complex V) that produces ATP from ADP in the presence of a proton gradient across the membrane which is generated by electron transport complexes of the respiratory chain. ATP synthase complex consist of a soluble F(1) head domain - the catalytic core - and a membrane F(1) domain - the membrane proton channel. These two domains are linked by a central stalk rotating inside the F(1) region and a stationary peripheral stalk. During catalysis, ATP synthesis in the catalytic domain of F(1) is coupled via a rotary mechanism of the central stalk subunits to proton translocation. In vivo, can only synthesize ATP although its ATP hydrolase activity can be activated artificially in vitro. With the central stalk subunit gamma, is essential for the biogenesis of F(1) catalytic part of the ATP synthase complex namely in the formation of F1 assembly intermediate. The chain is ATP synthase F(1) complex subunit delta, mitochondrial from Mus musculus (Mouse).